We begin with the raw amino-acid sequence, 139 residues long: Maximins 4/H3 type 5 (139 aa).

A signal peptide spans 1-18; the sequence is MNFKYIFAVSFLIASAYA. Positions 19 to 43 are excised as a propeptide; sequence RSVQNDEQSLSQRDVLEEESLREIR. Asparagine amide is present on Asn70. The propeptide occupies 74 to 118; the sequence is TAEEHEVMKRLEAVMRDLDSLDHPEEASERETRGFNQDEIAKEKR. Ile138 bears the Isoleucine amide mark.

It belongs to the bombinin family. In terms of tissue distribution, expressed by the skin glands.

It localises to the secreted. Functionally, maximin-4 shows antibacterial activity against both Gram-positive and Gram-negative bacteria. It also shows antimicrobial activity against the fungus C.albicans, but not against A.flavus nor P.uticale. It has little hemolytic activity. It does not possess a significant cytotoxicity against tumor cell lines. It does not possess a significant anti-HIV activity. Maximin-H3 shows antibacterial activity against both Gram-positive and Gram-negative bacteria. It also shows antimicrobial activity against the fungus C.albicans. Shows strong hemolytic activity. The sequence is that of Maximins 4/H3 type 5 from Bombina maxima (Giant fire-bellied toad).